A 629-amino-acid polypeptide reads, in one-letter code: DNA-directed RNA polymerase III subunit rpc3 (629 aa).

Disordered regions lie at residues 136 to 164 (ANGV…SNEQ), 247 to 294 (PRGA…EMGY), and 373 to 420 (QLDL…SGGN). Over residues 257-268 (RRADEPNKKCRT) the composition is skewed to basic and acidic residues. Over residues 272–293 (SVDENDEHDEEEENEWSDDEMG) the composition is skewed to acidic residues. Residues 374-388 (LDLSSSTGPMDSSQP) show a composition bias toward polar residues. Over residues 389–409 (DGRRGKRPWDGDVEGTNHEEA) the composition is skewed to basic and acidic residues. The interval 556 to 577 (TYKAMSRCLQRLRFERSRIKDF) is leucine-zipper.

It belongs to the RNA polymerase beta chain family. In terms of assembly, component of the RNA polymerase III (Pol III) complex consisting of 17 subunits.

The protein localises to the nucleus. In terms of biological role, DNA-dependent RNA polymerase catalyzes the transcription of DNA into RNA using the four ribonucleoside triphosphates as substrates. Specific core component of RNA polymerase III which synthesizes small RNAs, such as 5S rRNA and tRNAs. This is DNA-directed RNA polymerase III subunit rpc3 (rpc82) from Aspergillus fumigatus (strain ATCC MYA-4609 / CBS 101355 / FGSC A1100 / Af293) (Neosartorya fumigata).